The chain runs to 220 residues: Fibroblast growth factor 3 (220 aa).

The N-terminal stretch at 1–19 (MLVIWLLLLALLPEPRVPA) is a signal peptide. The segment at 19 to 40 (AATASPRAPRDAGGRGGVYEHL) is disordered. The N-linked (GlcNAc...) asparagine glycan is linked to N66.

It belongs to the heparin-binding growth factors family.

The protein resides in the secreted. In terms of biological role, plays an important role in the regulation of embryonic development, cell proliferation, and cell differentiation. The chain is Fibroblast growth factor 3 (FGF3) from Gallus gallus (Chicken).